The chain runs to 304 residues: Lipoyl synthase (304 aa).

Residues cysteine 41, cysteine 46, cysteine 52, cysteine 68, cysteine 72, cysteine 75, and serine 281 each contribute to the [4Fe-4S] cluster site. In terms of domain architecture, Radical SAM core spans 54-270; the sequence is GARRTATFMI…RKIAMEKGFK (217 aa). The disordered stretch occupies residues 282-304; it reads YHADEQVNEAAKEKQRQGEEQLN.

It belongs to the radical SAM superfamily. Lipoyl synthase family. It depends on [4Fe-4S] cluster as a cofactor.

It localises to the cytoplasm. It carries out the reaction [[Fe-S] cluster scaffold protein carrying a second [4Fe-4S](2+) cluster] + N(6)-octanoyl-L-lysyl-[protein] + 2 oxidized [2Fe-2S]-[ferredoxin] + 2 S-adenosyl-L-methionine + 4 H(+) = [[Fe-S] cluster scaffold protein] + N(6)-[(R)-dihydrolipoyl]-L-lysyl-[protein] + 4 Fe(3+) + 2 hydrogen sulfide + 2 5'-deoxyadenosine + 2 L-methionine + 2 reduced [2Fe-2S]-[ferredoxin]. It participates in protein modification; protein lipoylation via endogenous pathway; protein N(6)-(lipoyl)lysine from octanoyl-[acyl-carrier-protein]. In terms of biological role, catalyzes the radical-mediated insertion of two sulfur atoms into the C-6 and C-8 positions of the octanoyl moiety bound to the lipoyl domains of lipoate-dependent enzymes, thereby converting the octanoylated domains into lipoylated derivatives. The protein is Lipoyl synthase of Staphylococcus epidermidis (strain ATCC 35984 / DSM 28319 / BCRC 17069 / CCUG 31568 / BM 3577 / RP62A).